The primary structure comprises 93 residues: OMEGA-ectatommitoxin(02)-Rm1c (93 aa).

Positions 1–30 (MKDSYISIVIAYLMVTFILVSSMPIEGEKG) are cleaved as a signal peptide. 3 disulfides stabilise this stretch: cysteine 39–cysteine 52, cysteine 47–cysteine 68, and cysteine 70–cysteine 79. The EGF-like domain maps to 43–80 (YENYCFNGKCVHVVAQDEPGKPCYSCICDEFYIGERCG).

The protein belongs to the EGF domain peptide family. As to expression, expressed by the venom gland.

It is found in the secreted. In terms of biological role, ant peptide with probable defensive activity which acts as a potent agonist of the mammalian epidermal growth factor receptor (EGFR). Mimics, both structurally and functionally, vertebrate epidermal growth factor (EGF) peptide hormones. In vivo, intraplantar injection in mice causes long-lasting (several days) hypersensitivity of the injected paw to both mechanical and thermal stimuli. Its long-lasting effect is unusual for venom toxins whose effects are usually immediate. One possible explanation is that it would reduce the duration of a nest attack, discourage future attacks, or enhance the actions of subsequent exposure to other pain-inducing venom peptides. The chain is OMEGA-ectatommitoxin(02)-Rm1c from Rhytidoponera metallica (Australian green-headed ant).